Consider the following 142-residue polypeptide: Putative pre-16S rRNA nuclease (142 aa).

The protein belongs to the YqgF nuclease family.

Its subcellular location is the cytoplasm. Its function is as follows. Could be a nuclease involved in processing of the 5'-end of pre-16S rRNA. The chain is Putative pre-16S rRNA nuclease from Blochmanniella floridana.